Consider the following 433-residue polypeptide: Trigger factor (433 aa).

One can recognise a PPIase FKBP-type domain in the interval G165 to V250.

This sequence belongs to the FKBP-type PPIase family. Tig subfamily.

The protein resides in the cytoplasm. It carries out the reaction [protein]-peptidylproline (omega=180) = [protein]-peptidylproline (omega=0). In terms of biological role, involved in protein export. Acts as a chaperone by maintaining the newly synthesized protein in an open conformation. Functions as a peptidyl-prolyl cis-trans isomerase. This Sulfurimonas denitrificans (strain ATCC 33889 / DSM 1251) (Thiomicrospira denitrificans (strain ATCC 33889 / DSM 1251)) protein is Trigger factor.